The primary structure comprises 306 residues: GTPase Era (306 aa).

Residues 14–181 form the Era-type G domain; that stretch reads KSGFIGIIGR…LDELWKYLPE (168 aa). A G1 region spans residues 22–29; that stretch reads GRPNVGKS. 22–29 lines the GTP pocket; the sequence is GRPNVGKS. The interval 48–52 is G2; that stretch reads QTTRN. The interval 69–72 is G3; it reads DTPG. GTP-binding positions include 69 to 73 and 131 to 134; these read DTPGI and NKID. A G4 region spans residues 131–134; that stretch reads NKID. Positions 160–162 are G5; the sequence is ISA. Residues 212 to 290 form the KH type-2 domain; the sequence is THKEIPYSSA…FLELFVRVRK (79 aa).

It belongs to the TRAFAC class TrmE-Era-EngA-EngB-Septin-like GTPase superfamily. Era GTPase family. In terms of assembly, monomer.

It is found in the cytoplasm. The protein resides in the cell inner membrane. In terms of biological role, an essential GTPase that binds both GDP and GTP, with rapid nucleotide exchange. Plays a role in 16S rRNA processing and 30S ribosomal subunit biogenesis and possibly also in cell cycle regulation and energy metabolism. The sequence is that of GTPase Era from Syntrophus aciditrophicus (strain SB).